A 149-amino-acid polypeptide reads, in one-letter code: UPF0208 membrane protein VSAL_I2111 (149 aa).

The next 2 membrane-spanning stretches (helical) occupy residues 41–61 (FAVK…MVFN) and 69–89 (SIII…WLGN).

Belongs to the UPF0208 family.

The protein resides in the cell inner membrane. The protein is UPF0208 membrane protein VSAL_I2111 of Aliivibrio salmonicida (strain LFI1238) (Vibrio salmonicida (strain LFI1238)).